The sequence spans 181 residues: Adenylate kinase 2 (181 aa).

Position 10–15 (10–15 (GSGKST)) interacts with ATP. An NMP region spans residues 30 to 59 (SMGGILREAIANATPLGIKAKPYVERGDLL). Residues Arg36, 57 to 59 (DLL), 85 to 88 (GYPR), and Gln92 contribute to the AMP site. The segment at 126–132 (NRSLFDD) is LID. Arg127 serves as a coordination point for ATP. An AMP-binding site is contributed by Arg140. Pro168 is an ATP binding site.

This sequence belongs to the adenylate kinase family. As to quaternary structure, monomer.

The protein localises to the cytoplasm. It catalyses the reaction AMP + ATP = 2 ADP. Its pathway is purine metabolism; AMP biosynthesis via salvage pathway; AMP from ADP: step 1/1. In terms of biological role, catalyzes the reversible transfer of the terminal phosphate group between ATP and AMP. Plays an important role in cellular energy homeostasis and in adenine nucleotide metabolism. In Synechocystis sp. (strain ATCC 27184 / PCC 6803 / Kazusa), this protein is Adenylate kinase 2.